A 237-amino-acid polypeptide reads, in one-letter code: Phosphatidylserine decarboxylase proenzyme (237 aa).

Residue Ser206 is the Schiff-base intermediate with substrate; via pyruvic acid of the active site. Ser206 carries the pyruvic acid (Ser); by autocatalysis modification.

This sequence belongs to the phosphatidylserine decarboxylase family. PSD-A subfamily. Heterodimer of a large membrane-associated beta subunit and a small pyruvoyl-containing alpha subunit. Pyruvate serves as cofactor. Is synthesized initially as an inactive proenzyme. Formation of the active enzyme involves a self-maturation process in which the active site pyruvoyl group is generated from an internal serine residue via an autocatalytic post-translational modification. Two non-identical subunits are generated from the proenzyme in this reaction, and the pyruvate is formed at the N-terminus of the alpha chain, which is derived from the carboxyl end of the proenzyme. The post-translation cleavage follows an unusual pathway, termed non-hydrolytic serinolysis, in which the side chain hydroxyl group of the serine supplies its oxygen atom to form the C-terminus of the beta chain, while the remainder of the serine residue undergoes an oxidative deamination to produce ammonia and the pyruvoyl prosthetic group on the alpha chain.

It localises to the cell membrane. The enzyme catalyses a 1,2-diacyl-sn-glycero-3-phospho-L-serine + H(+) = a 1,2-diacyl-sn-glycero-3-phosphoethanolamine + CO2. The protein operates within phospholipid metabolism; phosphatidylethanolamine biosynthesis; phosphatidylethanolamine from CDP-diacylglycerol: step 2/2. Functionally, catalyzes the formation of phosphatidylethanolamine (PtdEtn) from phosphatidylserine (PtdSer). In Rhodococcus erythropolis (strain PR4 / NBRC 100887), this protein is Phosphatidylserine decarboxylase proenzyme.